The chain runs to 107 residues: ATP-dependent Clp protease adapter protein ClpS (107 aa).

Positions 1 to 20 are disordered; that stretch reads MAQKHEHDTSVITESAPKQK.

Belongs to the ClpS family. Binds to the N-terminal domain of the chaperone ClpA.

Its function is as follows. Involved in the modulation of the specificity of the ClpAP-mediated ATP-dependent protein degradation. This is ATP-dependent Clp protease adapter protein ClpS from Myxococcus xanthus (strain DK1622).